The primary structure comprises 617 residues: Ceramide transfer protein (617 aa).

Residues 1 to 11 (MSDNQSWNSSG) show a composition bias toward polar residues. The interval 1–23 (MSDNQSWNSSGSEEDLEPESGPP) is disordered. Residues 23–117 (PVERCGVLSK…WIDSIEQHKS (95 aa)) form the PH domain. Residues 268-302 (REDSWQKRLDKEIEKRRRVEEAYKNAMTELKKKSH) are a coiled coil. Positions 320–326 (EFFDAVE) match the FFAT motif. The segment at 341 to 382 (EKGRSHWPPSPPSSEAHTAAGSHRLVQAPPSCPPPTDLVSSS) is disordered. The START domain maps to 383–611 (DEHRFRIQVE…FTSYVQEKTA (229 aa)). Glutamate 466, glutamine 487, asparagine 524, and tyrosine 572 together coordinate an N-acylsphing-4-enine.

The protein localises to the cytoplasm. The protein resides in the golgi apparatus. Its subcellular location is the endoplasmic reticulum. The catalysed reaction is N-hexadecanoylsphing-4-enine(in) = N-hexadecanoylsphing-4-enine(out). Functionally, may mediate the intracellular trafficking of ceramide in a non-vesicular manner. The polypeptide is Ceramide transfer protein (cert1) (Xenopus laevis (African clawed frog)).